The sequence spans 462 residues: NAD(P) transhydrogenase subunit beta (462 aa).

The Periplasmic portion of the chain corresponds to 1 to 3; that stretch reads MSG. Residues 4–24 traverse the membrane as a helical segment; sequence GLVTAAYIVAAILFIFSLAGL. Residues 25 to 45 lie on the Cytoplasmic side of the membrane; sequence SKHETSRQGNNFGIAGMAIAL. A helical transmembrane segment spans residues 46–66; sequence IATIFGPDTGNVGWILLAMVI. Over 67–82 the chain is Periplasmic; the sequence is GGAIGIRLAKKVEMTE. Residues 83–103 form a helical membrane-spanning segment; that stretch reads MPELVAILHSFVGLAAVLVGF. The Cytoplasmic portion of the chain corresponds to 104-115; sequence NSYLHHDAGMAP. Residues 116–136 traverse the membrane as a helical segment; the sequence is ILVNIHLTEVFLGIFIGAVTF. Topologically, residues 137–164 are periplasmic; sequence TGSVVAFGKLCGKISSKPLMLPNRHKMN. Residues 165-185 traverse the membrane as a helical segment; sequence LAALVVSFLLLIVFVRTDSVG. Residues 186-188 lie on the Cytoplasmic side of the membrane; it reads LQV. A helical transmembrane segment spans residues 189–209; sequence LALLIMTAIALVFGWHLVASI. At 210 to 215 the chain is on the periplasmic side; that stretch reads GGADMP. Residues 216 to 236 traverse the membrane as a helical segment; the sequence is VVVSMLNSYSGWAAAAAGFML. Residues 237-239 lie on the Cytoplasmic side of the membrane; the sequence is SND. The helical transmembrane segment at 240-260 threads the bilayer; that stretch reads LLIVTGALVGSSGAILSYIMC. Topologically, residues 261–308 are periplasmic; that stretch reads KAMNRSFISVIAGGFGTDGSSTGDDQEVGEHREITAEETAELLKNSHS. A helical membrane pass occupies residues 309 to 329; that stretch reads VIITPGYGMAVAQAQYPVAEI. At 330–462 the chain is on the cytoplasmic side; sequence TEKLRARGIN…ASVDAILKAL (133 aa).

The protein belongs to the PNT beta subunit family. As to quaternary structure, heterodimer of an alpha and a beta chain.

It is found in the cell inner membrane. It carries out the reaction NAD(+) + NADPH + H(+)(in) = NADH + NADP(+) + H(+)(out). Functionally, the transhydrogenation between NADH and NADP is coupled to respiration and ATP hydrolysis and functions as a proton pump across the membrane. This is NAD(P) transhydrogenase subunit beta (pntB) from Escherichia coli O157:H7.